We begin with the raw amino-acid sequence, 345 residues long: uncharacterized protein (345 aa).

The protein resides in the cell membrane. Involved in potassium and divalent cation transport. Enhances the transport activity of the cation/potassium transporter CzcD. This is an uncharacterized protein from Bacillus velezensis (strain DSM 23117 / BGSC 10A6 / LMG 26770 / FZB42) (Bacillus amyloliquefaciens subsp. plantarum).